A 496-amino-acid polypeptide reads, in one-letter code: Cyclin-L1 (496 aa).

2 cyclin-like regions span residues 68–170 (ELIQ…RILK) and 183–267 (KIIV…TTLR). A disordered region spans residues 301 to 496 (NPDGTPAILS…SHSGHGRHRR (196 aa)). The segment covering 322–347 (SPRDVKTEEKSPNFAKVKREMDDKQS) has biased composition (basic and acidic residues). Basic residues-rich tracts occupy residues 358–392 (ENKR…RRSR), 412–426 (RRHH…KLKH), 434–446 (RHAH…HSPS), and 456–468 (KKHR…HRER). Residues 363-406 (RSVSRSRSRTKSRSRSHSPRRHYNNRRRSRSGTYSSRSRSRSRS) form an RS region. A compositionally biased stretch (basic and acidic residues) spans 469–478 (RERSRSFERS). Basic residues predominate over residues 479 to 496 (HKNKHHGSSHSGHGRHRR).

It belongs to the cyclin family. Cyclin L subfamily.

It localises to the nucleus speckle. It is found in the nucleus. Its subcellular location is the nucleoplasm. Involved in pre-mRNA splicing. This is Cyclin-L1 (ccnl1) from Xenopus laevis (African clawed frog).